A 576-amino-acid chain; its full sequence is Low-affinity glucose transporter HXT4 (576 aa).

Residues 1 to 56 (MSEEAAYQEDTAVQNTPADALSPVESDSNSALSTPSNKAERDDMKDFDENHEESNN) are disordered. At 1 to 66 (MSEEAAYQED…YVEIPKKPAS (66 aa)) the chain is on the cytoplasmic side. A compositionally biased stretch (polar residues) spans 25 to 37 (ESDSNSALSTPSN). Basic and acidic residues predominate over residues 38 to 54 (KAERDDMKDFDENHEES). K45 is covalently cross-linked (Glycyl lysine isopeptide (Lys-Gly) (interchain with G-Cter in ubiquitin)). A helical transmembrane segment spans residues 67–87 (AYVTVSICCLMVAFGGFVFGW). Residues 88-122 (DTGTISGFVAQTDFIRRFGMKHHDGTYYLSKVRTG) are Extracellular-facing. The helical transmembrane segment at 123 to 143 (LIVSIFNIGCAIGGIILAKLG) threads the bilayer. The Cytoplasmic segment spans residues 144–149 (DMYGRK). The helical transmembrane segment at 150 to 170 (MGLIVVVVIYIIGIIIQIASI) threads the bilayer. Residues 171–180 (NKWYQYFIGR) lie on the Extracellular side of the membrane. A helical transmembrane segment spans residues 181–201 (IISGLGVGGIAVLSPMLISEV). The Cytoplasmic portion of the chain corresponds to 202 to 207 (SPKHIR). A helical membrane pass occupies residues 208 to 228 (GTLVSCYQLMITLGIFLGYCT). Residues 229–242 (NYGTKTYTNSVQWR) are Extracellular-facing. A helical transmembrane segment spans residues 243-263 (VPLGLGFAWALFMIGGMTFVP). Topologically, residues 264–346 (ESPRYLVEVG…IQSLQQLTGD (83 aa)) are cytoplasmic. Residues 347–363 (NYFFYYGTTVFTAVGLE) traverse the membrane as a helical segment. The Extracellular portion of the chain corresponds to 364 to 369 (DSFETS). Residues 370 to 387 (IVLGIVNFASTFVGIFLV) form a helical membrane-spanning segment. Residues 388–394 (ERYGRRR) lie on the Cytoplasmic side of the membrane. Residues 395–415 (CLLWGAASMTACMVVFASVGV) traverse the membrane as a helical segment. The Extracellular portion of the chain corresponds to 416–437 (TRLWPNGKKNGSSKGAGNCMIV). Residue N425 is glycosylated (N-linked (GlcNAc...) asparagine). A helical membrane pass occupies residues 438–458 (FTCFYLFCFATTWAPIPFVVN). Topologically, residues 459 to 475 (SETFPLRVKSKCMAIAQ) are cytoplasmic. A helical transmembrane segment spans residues 476–496 (ACNWIWGFLIGFFTPFISGAI). Residue D497 is a topological domain, extracellular. Residues 498 to 518 (FYYGYVFMGCLVFSYFYVFFF) form a helical membrane-spanning segment. At 519-576 (VPETKGLTLEEVNTLWEEGVLPWKSPSWVPPNKRGTDYNADDLMHDDQPFYKKMFGKK) the chain is on the cytoplasmic side.

It belongs to the major facilitator superfamily. Sugar transporter (TC 2.A.1.1) family.

The protein localises to the cell membrane. Xylose uptake is strongly inhibited by glucose. Low-affinity glucose transporter. Can also transport xylose. The sequence is that of Low-affinity glucose transporter HXT4 (HXT4) from Saccharomyces cerevisiae (strain ATCC 204508 / S288c) (Baker's yeast).